We begin with the raw amino-acid sequence, 124 residues long: MPTIQQLVRLRRIQITKKTKSPALVNCPQRRGVCTRVYTTTPKKPNSAIRKVARVRLTSGFEVTAYIPGEGHNLQEHSVVLIRGGRVKDLPGVRYHIVRGALDSGGVKDRTQRRSKYGVKKPKS.

A disordered region spans residues 104-124; sequence SGGVKDRTQRRSKYGVKKPKS. Residues 113 to 124 are compositionally biased toward basic residues; sequence RRSKYGVKKPKS.

Belongs to the universal ribosomal protein uS12 family. In terms of assembly, part of the 30S ribosomal subunit.

It localises to the plastid. The protein resides in the chloroplast. In terms of biological role, with S4 and S5 plays an important role in translational accuracy. Located at the interface of the 30S and 50S subunits. The chain is Small ribosomal subunit protein uS12c (rps12) from Thalassiosira pseudonana (Marine diatom).